A 152-amino-acid chain; its full sequence is Transcriptional regulator MraZ (152 aa).

SpoVT-AbrB domains follow at residues 5–52 and 81–124; these read AHAI…PLCE and ASEC…SETR.

Belongs to the MraZ family. As to quaternary structure, forms oligomers.

The protein localises to the cytoplasm. It is found in the nucleoid. This is Transcriptional regulator MraZ from Tolumonas auensis (strain DSM 9187 / NBRC 110442 / TA 4).